Here is a 357-residue protein sequence, read N- to C-terminus: UDP-N-acetylglucosamine--N-acetylmuramyl-(pentapeptide) pyrophosphoryl-undecaprenol N-acetylglucosamine transferase (357 aa).

UDP-N-acetyl-alpha-D-glucosamine contacts are provided by residues 14–16 (TGG), N126, R162, S190, I246, 265–270 (ALTVCE), and Q290.

It belongs to the glycosyltransferase 28 family. MurG subfamily.

Its subcellular location is the cell inner membrane. It catalyses the reaction di-trans,octa-cis-undecaprenyl diphospho-N-acetyl-alpha-D-muramoyl-L-alanyl-D-glutamyl-meso-2,6-diaminopimeloyl-D-alanyl-D-alanine + UDP-N-acetyl-alpha-D-glucosamine = di-trans,octa-cis-undecaprenyl diphospho-[N-acetyl-alpha-D-glucosaminyl-(1-&gt;4)]-N-acetyl-alpha-D-muramoyl-L-alanyl-D-glutamyl-meso-2,6-diaminopimeloyl-D-alanyl-D-alanine + UDP + H(+). It participates in cell wall biogenesis; peptidoglycan biosynthesis. Its function is as follows. Cell wall formation. Catalyzes the transfer of a GlcNAc subunit on undecaprenyl-pyrophosphoryl-MurNAc-pentapeptide (lipid intermediate I) to form undecaprenyl-pyrophosphoryl-MurNAc-(pentapeptide)GlcNAc (lipid intermediate II). The polypeptide is UDP-N-acetylglucosamine--N-acetylmuramyl-(pentapeptide) pyrophosphoryl-undecaprenol N-acetylglucosamine transferase (Histophilus somni (strain 129Pt) (Haemophilus somnus)).